The sequence spans 315 residues: MQIALAPMEGLVDEILRDVLTRIGGIDWCVTEFIRVSERLLPAATYHKLAPELFNGSRTRAGTPMRVQFLGSDPQCLADNAAFACTLGAPVIDLNFGCPAKTVNKSRGGAVLLKEPELLHAIVREVRRTVPAEIPVTAKMRLGFEGKEGALDCARALAEGGASQIVVHARTKVEGYKPPAHWEWVARVQEVVGVPVFANGEVWTLDDWRRCREISGVDDIMLGRGLVSRPGLARQIAAVRAGEEPEDMSWAELQPLLLDFWQQARRKLAPRYAPGRLKQWLAMLTRTYPEAVALFAEVRREQDCERIDQLLALSP.

FMN-binding positions include 7–9 (PME) and glutamine 68. Residue cysteine 98 is the Proton donor of the active site. FMN contacts are provided by residues lysine 139, 199-201 (NGE), and 223-224 (GR).

This sequence belongs to the Dus family. DusC subfamily. Requires FMN as cofactor.

The enzyme catalyses 5,6-dihydrouridine(16) in tRNA + NADP(+) = uridine(16) in tRNA + NADPH + H(+). It carries out the reaction 5,6-dihydrouridine(16) in tRNA + NAD(+) = uridine(16) in tRNA + NADH + H(+). Its function is as follows. Catalyzes the synthesis of 5,6-dihydrouridine (D), a modified base found in the D-loop of most tRNAs, via the reduction of the C5-C6 double bond in target uridines. Specifically modifies U16 in tRNAs. The sequence is that of tRNA-dihydrouridine(16) synthase from Aquipseudomonas alcaligenes (Pseudomonas alcaligenes).